Consider the following 78-residue polypeptide: Xibalbin-13 1 (78 aa).

Residues 1–27 (MKEANTRRYIHLCLVVVLVSTIITTEA) form the signal peptide. Positions 28-31 (EDDR) are excised as a propeptide. 4 disulfides stabilise this stretch: cysteine 34–cysteine 49, cysteine 41–cysteine 54, cysteine 48–cysteine 65, and cysteine 56–cysteine 63. At serine 76 the chain carries Serine amide.

Belongs to the xibalbin-13 family. In terms of tissue distribution, expressed by the venom gland.

Its subcellular location is the secreted. Its function is as follows. Probable neurotoxin. Strongly inhibits voltage-gated potassium channels (Kv1.1/KCNA1, Kv1.2/KCNA2, Kv1.3/KCNA3, and Kv1.6/KCNA6) and mildly inhibits sodium channels (Nav1.2/SCN2A, Nav1.4/SCN4A, Nav1.5/SCN5A, Nav1.6/SCN8A, and BgNav). Induces activation of protein kinase A type II (PKA-II) and MAP kinase Erk1/2 in primary nociceptive and non-nociceptive sensory neurons. Does not show cytotoxic activity. Does not have an impact on Ca2+, cAMP, and NO signaling in the cell types analyzed. Does not interfere with the adhesion of leukocytes to endothelial cells. This is Xibalbin-13 1 from Xibalbanus tulumensis (Blind cave remipede).